The sequence spans 435 residues: Nuclear hormone receptor family member nhr-136 (435 aa).

Residues 50–129 constitute a DNA-binding region (nuclear receptor); the sequence is PSNCKVCRHS…AGMNPSAIQA (80 aa). NR C4-type zinc fingers lie at residues 53 to 73 and 89 to 112; these read CKVC…CNGC and CLKM…CRAC. An NR LBD domain is found at 194–430; that stretch reads RDIRKLDELI…RYTRISNLYE (237 aa).

Belongs to the nuclear hormone receptor family.

The protein resides in the nucleus. Its function is as follows. Orphan nuclear receptor. This chain is Nuclear hormone receptor family member nhr-136 (nhr-136), found in Caenorhabditis elegans.